Consider the following 55-residue polypeptide: uncharacterized protein (55 aa).

This is an uncharacterized protein from Clostridium perfringens.